A 216-amino-acid polypeptide reads, in one-letter code: uncharacterized protein (216 aa).

Residues 55 to 216 are disordered; it reads NEDKAEAMSN…NEKEKDVNPK (162 aa). Basic and acidic residues-rich tracts occupy residues 134–152, 177–187, and 207–216; these read LTEKPLTDTEPELHPDNHV, KINDKSDDTLH, and NEKEKDVNPK.

This is an uncharacterized protein from Caenorhabditis elegans.